We begin with the raw amino-acid sequence, 322 residues long: Gluconeogenesis factor (322 aa).

This sequence belongs to the gluconeogenesis factor family.

Its subcellular location is the cytoplasm. In terms of biological role, required for morphogenesis under gluconeogenic growth conditions. This chain is Gluconeogenesis factor, found in Listeria monocytogenes serovar 1/2a (strain ATCC BAA-679 / EGD-e).